The sequence spans 355 residues: tRNA pseudouridine synthase D (355 aa).

The active-site Nucleophile is aspartate 84. The region spanning 160 to 306 (GVPNYFGLQR…MAHERRILRL (147 aa)) is the TRUD domain.

It belongs to the pseudouridine synthase TruD family.

It catalyses the reaction uridine(13) in tRNA = pseudouridine(13) in tRNA. In terms of biological role, responsible for synthesis of pseudouridine from uracil-13 in transfer RNAs. This is tRNA pseudouridine synthase D from Pseudomonas aeruginosa (strain LESB58).